The following is a 288-amino-acid chain: Chemotaxis protein methyltransferase 2 (288 aa).

The CheR-type methyltransferase domain maps to 1 to 280 (MNEIVITDTD…TGYYKPHKGK (280 aa)). Residues Asn-76, Thr-78, Arg-82, Glu-119, Asp-145, 200-201 (NL), and 219-220 (RN) contribute to the S-adenosyl-L-methionine site.

The catalysed reaction is L-glutamyl-[protein] + S-adenosyl-L-methionine = [protein]-L-glutamate 5-O-methyl ester + S-adenosyl-L-homocysteine. In terms of biological role, methylation of the membrane-bound methyl-accepting chemotaxis proteins (MCP) to form gamma-glutamyl methyl ester residues in MCP. This is Chemotaxis protein methyltransferase 2 (cheR2) from Vibrio cholerae serotype O1 (strain ATCC 39315 / El Tor Inaba N16961).